We begin with the raw amino-acid sequence, 353 residues long: MVNGWLNLDKPTGMSSAQAVTQIKRIFGIKKAGHLGTLDPLASGILPIALGEATKTIPYLSCDLKAYNFTIKWGKQTTTDDLGGDIIRTSDIKPEYNQINCAIKDFIGEITQTPPQFSAVKIKGARAYKLARSGQKVNIKPRQVKIHELKMIFLDTINNIADFSMICGSGVYVRSIARDLGIELNCFGHITQLRRTMVGDFKEDESVTIEQLTKKNTTTYSPQCLTLDTNTYKSCNGQKILGAYVKNNVRDEIGLIPVLDTGMTSEGGMTEDDGGNTKGFIIPIESALKSMFKVEISLEEAEKIRKGQEIILNNLRNLKNYDIFCTIVGNVPIAICSFTHGYVKPIRVFNILK.

The Nucleophile role is filled by Asp-39.

The protein belongs to the pseudouridine synthase TruB family. Type 1 subfamily.

It catalyses the reaction uridine(55) in tRNA = pseudouridine(55) in tRNA. Functionally, responsible for synthesis of pseudouridine from uracil-55 in the psi GC loop of transfer RNAs. This chain is tRNA pseudouridine synthase B, found in Wolbachia pipientis subsp. Culex pipiens (strain wPip).